The chain runs to 353 residues: D-glycerol 3-phosphate phosphatase (353 aa).

Residue D14 is the Nucleophile of the active site. Mg(2+) is bound by residues D14, D16, and D209. D16 acts as the Proton donor in catalysis.

The protein belongs to the HAD-like hydrolase superfamily. Homodimer. Mg(2+) serves as cofactor. Co(2+) is required as a cofactor. The cofactor is Mn(2+).

It carries out the reaction sn-glycerol 1-phosphate + H2O = glycerol + phosphate. Its pathway is glycerolipid metabolism. Its function is as follows. Dephosphorylates D-glycerol 3-phosphate (sn-glycerol 1-phosphate). Is the final enzyme involved in the recycling/catabolism of glycerophospholipid polar heads. To a lesser extent, is also able to act on glycerol 2-phosphate and D-ribulose 5-phosphate, but cannot use D-glyceraldehyde 3-phosphate, dihydroxyacetone-phosphate, UMP or GMP as substrates. This Mycobacterium tuberculosis (strain ATCC 25618 / H37Rv) protein is D-glycerol 3-phosphate phosphatase.